A 765-amino-acid polypeptide reads, in one-letter code: uncharacterized protein (765 aa).

The N-terminal stretch at 1–22 is a signal peptide; sequence MKLKGFLAVGVSVFGFSGLLMA. Cysteine 23 carries N-palmitoyl cysteine lipidation. Cysteine 23 carries the S-diacylglycerol cysteine lipid modification. 2 disordered regions span residues 177-203 and 218-255; these read EGTP…LEIA and TAQN…TTKS. Positions 179-192 are enriched in polar residues; sequence TPTSTTVQATVSSR. Low complexity predominate over residues 236-247; it reads SSSSSSTTSTTG.

It belongs to the MG185/MG260 family.

It localises to the cell membrane. This is an uncharacterized protein from Mycoplasma genitalium (strain ATCC 33530 / DSM 19775 / NCTC 10195 / G37) (Mycoplasmoides genitalium).